Consider the following 187-residue polypeptide: Protein GrpE (187 aa).

Positions 1–22 (MADEQNLDAQAQDQAAEAGAGD) are disordered. The segment covering 7 to 22 (LDAQAQDQAAEAGAGD) has biased composition (low complexity).

The protein belongs to the GrpE family. Homodimer.

It localises to the cytoplasm. Its function is as follows. Participates actively in the response to hyperosmotic and heat shock by preventing the aggregation of stress-denatured proteins, in association with DnaK and GrpE. It is the nucleotide exchange factor for DnaK and may function as a thermosensor. Unfolded proteins bind initially to DnaJ; upon interaction with the DnaJ-bound protein, DnaK hydrolyzes its bound ATP, resulting in the formation of a stable complex. GrpE releases ADP from DnaK; ATP binding to DnaK triggers the release of the substrate protein, thus completing the reaction cycle. Several rounds of ATP-dependent interactions between DnaJ, DnaK and GrpE are required for fully efficient folding. This chain is Protein GrpE, found in Pseudomonas syringae pv. tomato (strain ATCC BAA-871 / DC3000).